The primary structure comprises 129 residues: Photosystem II reaction center Psb28 protein (129 aa).

A disordered region spans residues 110 to 129 (GLGYSNNSGNNEGADEASEG).

This sequence belongs to the Psb28 family. Part of the photosystem II complex.

It localises to the cellular thylakoid membrane. The protein is Photosystem II reaction center Psb28 protein of Synechococcus sp. (strain WH7803).